A 436-amino-acid chain; its full sequence is GTPase Der (436 aa).

2 EngA-type G domains span residues 4-167 and 175-351; these read PTVA…PVEE and IRFS…ESQN. Residues 10-17, 57-61, 119-122, 181-188, 229-233, and 294-297 each bind GTP; these read GRPNVGKS, DTGGI, NKVD, DTAGM, and NKWD. The 85-residue stretch at 352-436 folds into the KH-like domain; it reads KRIPSAVLND…PINLIARKRK (85 aa).

Belongs to the TRAFAC class TrmE-Era-EngA-EngB-Septin-like GTPase superfamily. EngA (Der) GTPase family. In terms of assembly, associates with the 50S ribosomal subunit.

GTPase that plays an essential role in the late steps of ribosome biogenesis. The sequence is that of GTPase Der from Streptococcus agalactiae serotype III (strain NEM316).